We begin with the raw amino-acid sequence, 331 residues long: MSEIQSLTERALADVAAAQTPDQLEALRVALLGKSGSITAQLKQLGTLPAEQRKAAGEAINLSRDALTAALSERKHTLETAALDARLAGERIDVTLPGRRSERGGLHPVTRTLERIVEIFARLGYELSDGPEIEDDWHNFEALNFPPHHPARAMHDTFYFGDGRLLRTHTSGVQVRYMDAHKPPLRMIAAGKVYRSDSDQTHSPMFHQVEGLLVDEHSNFADLKGTLSEFVRAFFERDFEMRFRPSYFPFVEPGAEVDIAWQQPDGSTRWLEVLGCGMVHPNVLRSVGIDPERYTGFAFGLGVERFAMLRYGVNDLRAFFENDVRFLRQFA.

Mg(2+) is bound at residue Glu-252.

The protein belongs to the class-II aminoacyl-tRNA synthetase family. Phe-tRNA synthetase alpha subunit type 1 subfamily. In terms of assembly, tetramer of two alpha and two beta subunits. Requires Mg(2+) as cofactor.

The protein localises to the cytoplasm. It catalyses the reaction tRNA(Phe) + L-phenylalanine + ATP = L-phenylalanyl-tRNA(Phe) + AMP + diphosphate + H(+). The protein is Phenylalanine--tRNA ligase alpha subunit of Xanthomonas axonopodis pv. citri (strain 306).